Consider the following 145-residue polypeptide: MLTVLQRVKEARVDIDGQTVGKINHGLLILCGFEPNDSLENIKRMLDKCINYRIFEDPSGKMNLSLKDVNGGLLLVPQFTLMADTQKGLRPSFSNAASPELGRELFDNLLTLAQKCHQNTQSGCFGANMQVYLCNDGPVTFLLQF.

A Gly-cisPro motif, important for rejection of L-amino acids motif is present at residues Gly137–Pro138.

The protein belongs to the DTD family. Homodimer.

The protein localises to the cytoplasm. It carries out the reaction glycyl-tRNA(Ala) + H2O = tRNA(Ala) + glycine + H(+). It catalyses the reaction a D-aminoacyl-tRNA + H2O = a tRNA + a D-alpha-amino acid + H(+). In terms of biological role, an aminoacyl-tRNA editing enzyme that deacylates mischarged D-aminoacyl-tRNAs. Also deacylates mischarged glycyl-tRNA(Ala), protecting cells against glycine mischarging by AlaRS. Acts via tRNA-based rather than protein-based catalysis; rejects L-amino acids rather than detecting D-amino acids in the active site. By recycling D-aminoacyl-tRNA to D-amino acids and free tRNA molecules, this enzyme counteracts the toxicity associated with the formation of D-aminoacyl-tRNA entities in vivo and helps enforce protein L-homochirality. The chain is D-aminoacyl-tRNA deacylase from Legionella pneumophila (strain Lens).